The sequence spans 251 residues: Triosephosphate isomerase (251 aa).

Residue 9-11 (NWK) coordinates substrate. The active-site Electrophile is the H95. E167 serves as the catalytic Proton acceptor. Substrate is bound by residues G173, S213, and 234–235 (GG).

The protein belongs to the triosephosphate isomerase family. Homodimer.

The protein localises to the cytoplasm. It carries out the reaction D-glyceraldehyde 3-phosphate = dihydroxyacetone phosphate. It participates in carbohydrate biosynthesis; gluconeogenesis. Its pathway is carbohydrate degradation; glycolysis; D-glyceraldehyde 3-phosphate from glycerone phosphate: step 1/1. Functionally, involved in the gluconeogenesis. Catalyzes stereospecifically the conversion of dihydroxyacetone phosphate (DHAP) to D-glyceraldehyde-3-phosphate (G3P). The polypeptide is Triosephosphate isomerase (Trichlorobacter lovleyi (strain ATCC BAA-1151 / DSM 17278 / SZ) (Geobacter lovleyi)).